The following is an 874-amino-acid chain: uncharacterized protein (874 aa).

This is an uncharacterized protein from Ostreid herpesvirus 1 (isolate France) (OsHV-1).